The following is a 309-amino-acid chain: Aromatic prenyltransferase (309 aa).

This sequence belongs to the aromatic prenyltransferase family.

In terms of biological role, prenyltransferase that attaches isoprenoid moieties to carbon atoms of aromatic substrates in an enzyme-catalyzed Friedel-Crafts reaction. Shows specificity for dimethylallyl diphosphate (DMAPP) and does not accept geranyl diphosphate (GPP) or isopentenyl diphosphate (IPP). Prenylates the artificial substrate 2,7-dihydroxynaphthalene (2,7-DHN), as well as dihydrophenazine-1-carboxylic acid and 4-hydroxybenzoic acid at lower levels. Only traces of products are detected with aspulvinone E or flaviolin as substrates; and no product is formed with L-tryptophan, L-tyrosine, or 4-hydroxyphenylpyruvate. Ptf seems no to be involved in the prenylation reaction in the biosynthesis of aspulvinone H and J and the physiological function of ptf remains unknown. The polypeptide is Aromatic prenyltransferase (Botryotinia fuckeliana (strain B05.10) (Noble rot fungus)).